We begin with the raw amino-acid sequence, 251 residues long: Uridylate kinase (251 aa).

19-22 (KLSG) contributes to the ATP binding site. Residue glycine 61 coordinates UMP. 2 residues coordinate ATP: glycine 62 and arginine 66. Residues aspartate 81 and 142-149 (IGNPFFTT) contribute to the UMP site. 4 residues coordinate ATP: threonine 169, glutamine 170, tyrosine 175, and aspartate 178.

It belongs to the UMP kinase family. Homohexamer.

The protein resides in the cytoplasm. It carries out the reaction UMP + ATP = UDP + ADP. It functions in the pathway pyrimidine metabolism; CTP biosynthesis via de novo pathway; UDP from UMP (UMPK route): step 1/1. With respect to regulation, inhibited by UTP. Its function is as follows. Catalyzes the reversible phosphorylation of UMP to UDP. The polypeptide is Uridylate kinase (Hyphomonas neptunium (strain ATCC 15444)).